The chain runs to 464 residues: MTLRLFDTETRALRDFAPLAPGHASVYLCGATVQGDPHIGHVRSGVAFDVLRRWLLAHDYDVAFVRNVTDIEDKILNKAAEAGRPWWEWAATFERSFTWAYQQLGVLPPSVEPRATGHITQMVEMMQRLIDNGHAYAAGGDVYFDVRSYPRYGSLSGHKLDDVHQGESAGECKRDPRDFTLWKAEKPGEPSWPTPWGRGRPGWHLECSAMAEFYLGAAFDIHCGGLDLVFPHHENEIAQAKCAGDDFAQYWLHNGWVTMGGEKMSKSLGNVLSVPNVLKKVRPQELRYYLGSAHYRSMLEYSDTALDEGAAAYRRIESFVMRTQERAGEVTIGRWTDAFARALDDDLAVPAALAEVHGKVREGNIALDGGDLEGARAIASQVRAMLGILGVDPLDEHWTQETADASAATDALDVLVRAELERRQTARAEKNWAVADEVRDRLIRAGIEVTDTPNGPEWSLKAGQ.

A Zn(2+)-binding site is contributed by Cys-29. The short motif at 31 to 41 is the 'HIGH' region element; it reads ATVQGDPHIGH. Residues Cys-207, His-232, and Glu-236 each contribute to the Zn(2+) site. The 'KMSKS' region signature appears at 263–267; that stretch reads KMSKS. Lys-266 contributes to the ATP binding site.

The protein belongs to the class-I aminoacyl-tRNA synthetase family. Monomer. The cofactor is Zn(2+).

The protein localises to the cytoplasm. It catalyses the reaction tRNA(Cys) + L-cysteine + ATP = L-cysteinyl-tRNA(Cys) + AMP + diphosphate. The polypeptide is Cysteine--tRNA ligase (Rhodococcus opacus (strain B4)).